A 688-amino-acid polypeptide reads, in one-letter code: MFSNGLSKLIKSKIASTSIITTKNNYSISKLSFSSTSILLNKKYKLSEPFNYEQDCEYALKEPIQFWDEVASKYVHWNKRYEKVYSGDEYNPEWFKGGVLNACYNALDVHAKDPITKNRIAIIHETPSKNNTNKLTYGELWDEVCIFARGLHNLGVEKGDRVVIYMPMINQALIAMLACARLGATHSVVFGGFASPQLAQRIEHFKPKVVISANFGVEGHKINCYTPLLSKALELSSHKPNHTIVYNRLDVKLDAGEVLPPRVEGSLDWSELIKNIAPYRDYALVDSTHPLYILYTSGTTGMPKGVVRDTGGYSVALNYSIRNCYGMKSGDTFFAGSDVGWVVGHTLSVYGPLMVGLTSIIFEGKPTVPDASTYWKLIEKHRVNALFSAPTAIRAIHRDDADGKLASKCDLSSLRSIWLGGERLDSSTFNFLRNITNNKPILDNYWNTESGSPLITNPSCQVPIKANATGKPMPGYQFHVLSPTSERLGADKIGEVCIKLPVAPGFTNTLYLNPEGYKNAYLNEYPGYLRTADSGYYDENGYYHIISRVDDIINVSGHRLSTGSIEEILVKHPKIVECAVIGVHDELKGEIPFGLVVLKPQYKDCAEEVENELIKEVRENIGPVATFKKVLSVNRLPKTRSGKILRNILRKMYNKEEYTVPPTIEDMEVLKEIDIEFEKYKLSHPPKK.

It belongs to the ATP-dependent AMP-binding enzyme family.

The protein resides in the mitochondrion. The enzyme catalyses acetate + ATP + CoA = acetyl-CoA + AMP + diphosphate. Activates acetate so that it can be used for lipid synthesis or for energy generation. The polypeptide is Acyl-CoA synthetase short-chain family member B, mitochondrial (aslB) (Dictyostelium discoideum (Social amoeba)).